Reading from the N-terminus, the 156-residue chain is Small ribosomal subunit protein uS7 (156 aa).

Belongs to the universal ribosomal protein uS7 family. As to quaternary structure, part of the 30S ribosomal subunit. Contacts proteins S9 and S11.

In terms of biological role, one of the primary rRNA binding proteins, it binds directly to 16S rRNA where it nucleates assembly of the head domain of the 30S subunit. Is located at the subunit interface close to the decoding center, probably blocks exit of the E-site tRNA. The polypeptide is Small ribosomal subunit protein uS7 (Paenarthrobacter aurescens (strain TC1)).